The sequence spans 235 residues: Eukaryotic translation initiation factor 4E-1 (235 aa).

A compositionally biased stretch (basic and acidic residues) spans 16–25; sequence VNKHRGVRSD. The segment at 16-56 is disordered; sequence VNKHRGVRSDGEEDEQLEEGEIVGGDADTLSSSSSSRPGTA. Positions 26–36 are enriched in acidic residues; it reads GEEDEQLEEGE. EIF4G-binding regions lie at residues 60-63 and 70-106; these read HPLE and FDTPSAKSKQVAWGSSMRPIYTFSSVEEFWSLYNNIH. MRNA-binding positions include 78-83, lysine 110, and 128-129; these read KQVAWG and WE. Cysteine 133 and cysteine 171 are disulfide-bonded. Positions 154-163 are EIF4G-binding; sequence YTLLAMIGEQ. MRNA contacts are provided by residues 178–183 and 223–227; these read RARQEK and KTLDR.

It belongs to the eukaryotic initiation factor 4E family. In terms of assembly, EIF4F is a multi-subunit complex, the composition of which varies with external and internal environmental conditions. It is composed of at least EIF4A, EIF4E and EIF4G. EIF4E is also known to interact with other partners. In higher plants two isoforms of EIF4F have been identified, named isoform EIF4F and isoform EIF(iso)4F. Isoform EIF4F has subunits p220 and p26, whereas isoform EIF(iso)4F has subunits p82 and p28. (Microbial infection) Interacts with potyvirus viral genome-linked protein (VPg); this interaction is possible in susceptible hosts but impaired in resistant plants. In terms of processing, according to the redox status, the Cys-133-Cys-171 disulfide bridge may have a role in regulating protein function by affecting its ability to bind capped mRNA.

The protein resides in the nucleus. Its subcellular location is the cytoplasm. In terms of biological role, component of the protein complex eIF4F, which is involved in the recognition of the mRNA cap, ATP-dependent unwinding of 5'-terminal secondary structure and recruitment of mRNA to the ribosome. Recognizes and binds the 7-methylguanosine-containing mRNA cap during an early step in the initiation of protein synthesis and facilitates ribosome binding by inducing the unwinding of the mRNAs secondary structures. Key component of recessive resistance to potyviruses. (Microbial infection) Susceptibility host factor required for viral infection by recruiting viral RNAs to the host ribosomal complex via an interaction with viral genome-linked protein (VPg). The sequence is that of Eukaryotic translation initiation factor 4E-1 from Lactuca sativa (Garden lettuce).